Reading from the N-terminus, the 261-residue chain is Indole-3-glycerol phosphate synthase (261 aa).

This sequence belongs to the TrpC family.

The enzyme catalyses 1-(2-carboxyphenylamino)-1-deoxy-D-ribulose 5-phosphate + H(+) = (1S,2R)-1-C-(indol-3-yl)glycerol 3-phosphate + CO2 + H2O. The protein operates within amino-acid biosynthesis; L-tryptophan biosynthesis; L-tryptophan from chorismate: step 4/5. The chain is Indole-3-glycerol phosphate synthase from Paraburkholderia phytofirmans (strain DSM 17436 / LMG 22146 / PsJN) (Burkholderia phytofirmans).